The chain runs to 279 residues: Four and a half LIM domains protein 2 (279 aa).

Residues 7–31 (CHHCNESLFGKKYILREESPYCVVC) form a C4-type zinc finger. LIM zinc-binding domains are found at residues 40–92 (CEEC…CTDC), 101–153 (CQEC…CVPC), and 162–212 (CVQC…CLNC). A Glycyl lysine isopeptide (Lys-Gly) (interchain with G-Cter in SUMO2) cross-link involves residue Lys-78. Glycyl lysine isopeptide (Lys-Gly) (interchain with G-Cter in SUMO2) cross-links involve residues Lys-167 and Lys-220. Residues 221-275 (CAGCTNPISGLGGTKYISFEERQWHNDCFNCKKCSLSLVGRGFLTERDDILCPDC) enclose the LIM zinc-binding 4 domain. Phosphoserine is present on Ser-238.

As to quaternary structure, interacts with ZNF638 and TTN/titin. Interacts with E4F1. Interacts with GRB7. Interacts with SIRT1 and FOXO1. Interacts with CEFIP. Interacts with calcineurin. Interacts with FOXK1. As to expression, expressed in skeletal muscle and heart.

It localises to the cytoplasm. Its subcellular location is the nucleus. The protein localises to the myofibril. The protein resides in the sarcomere. It is found in the z line. In terms of biological role, may function as a molecular transmitter linking various signaling pathways to transcriptional regulation. Negatively regulates the transcriptional repressor E4F1 and may function in cell growth. Inhibits the transcriptional activity of FOXO1 and its apoptotic function by enhancing the interaction of FOXO1 with SIRT1 and FOXO1 deacetylation. Negatively regulates the calcineurin/NFAT signaling pathway in cardiomyocytes. In Homo sapiens (Human), this protein is Four and a half LIM domains protein 2 (FHL2).